A 467-amino-acid chain; its full sequence is Membrane-bound lytic murein transglycosylase F (467 aa).

Residues 1-33 form the signal peptide; the sequence is MTELFRHSKHLLASLALLSVLGLMLAMHPSPSA. The segment at 34 to 266 is non-LT domain; that stretch reads IERIMARGEL…KLEDRFYGHV (233 aa). The segment at 268-467 is LT domain; it reads QFNLYAARSF…RRDDTLIALN (200 aa). The active site involves glutamate 313.

The protein in the N-terminal section; belongs to the bacterial solute-binding protein 3 family. In the C-terminal section; belongs to the transglycosylase Slt family.

The protein localises to the cell outer membrane. It catalyses the reaction Exolytic cleavage of the (1-&gt;4)-beta-glycosidic linkage between N-acetylmuramic acid (MurNAc) and N-acetylglucosamine (GlcNAc) residues in peptidoglycan, from either the reducing or the non-reducing ends of the peptidoglycan chains, with concomitant formation of a 1,6-anhydrobond in the MurNAc residue.. In terms of biological role, murein-degrading enzyme that degrades murein glycan strands and insoluble, high-molecular weight murein sacculi, with the concomitant formation of a 1,6-anhydromuramoyl product. Lytic transglycosylases (LTs) play an integral role in the metabolism of the peptidoglycan (PG) sacculus. Their lytic action creates space within the PG sacculus to allow for its expansion as well as for the insertion of various structures such as secretion systems and flagella. The protein is Membrane-bound lytic murein transglycosylase F of Alcanivorax borkumensis (strain ATCC 700651 / DSM 11573 / NCIMB 13689 / SK2).